A 185-amino-acid chain; its full sequence is uncharacterized protein (185 aa).

The next 5 helical transmembrane spans lie at 4-24, 35-55, 60-80, 123-143, and 152-172; these read IAWMIVFCEIAFWVVIVLGLA, GLLFLALTPVIDLILLAATGV, GASATAAHGIAAVYIGISIAY, VLAYLIGAGLLAGMIYFINDS, and ILKLWTVIIGIDFLITASYFI.

It is found in the cell membrane. This is an uncharacterized protein from Bacillus subtilis (strain 168).